A 1377-amino-acid chain; its full sequence is Zinc finger MYM-type protein 2 (1377 aa).

Glycyl lysine isopeptide (Lys-Gly) (interchain with G-Cter in SUMO2) cross-links involve residues Lys-48, Lys-88, Lys-98, and Lys-104. 2 stretches are compositionally biased toward polar residues: residues 85–115 and 127–138; these read TSSK…SVSE and TNQGQEKNSSNF. The interval 85–177 is disordered; the sequence is TSSKNEELQG…GMGNSGITTE (93 aa). Basic and acidic residues predominate over residues 139–152; the sequence is IERRPPETKNRTND. Lys-147 participates in a covalent cross-link: Glycyl lysine isopeptide (Lys-Gly) (interchain with G-Cter in SUMO2). Over residues 153–164 the composition is skewed to polar residues; sequence VDFSTSSFSRSK. Ser-159 carries the phosphoserine modification. Glycyl lysine isopeptide (Lys-Gly) (interchain with G-Cter in SUMO2) cross-links involve residues Lys-253 and Lys-297. Residues 273–305 form a disordered region; the sequence is NGESATHHNPDSWISQSASFPRNQKQPGVDSLS. Residues 284-298 show a composition bias toward polar residues; that stretch reads SWISQSASFPRNQKQ. Residue Ser-305 is modified to Phosphoserine. Glycyl lysine isopeptide (Lys-Gly) (interchain with G-Cter in SUMO2) cross-links involve residues Lys-312, Lys-325, Lys-348, and Lys-366. The segment at 327–363 adopts an MYM-type 1 zinc-finger fold; the sequence is VKVTCANCKKPLQKGQTAYQRKGSAHLFCSTTCLSSF. The MYM-type 2 zinc finger occupies 369–409; the sequence is PKKLCVMCKKDITTMKGTIVAQVDSSESFQEFCSTSCLSLY. Glycyl lysine isopeptide (Lys-Gly) (interchain with G-Cter in SUMO2) cross-links involve residues Lys-417, Lys-441, Lys-491, Lys-503, Lys-513, Lys-529, and Lys-532. MYM-type zinc fingers lie at residues 421–456 and 463–502; these read NKSR…FNRY and IMNC…VSEY. The MYM-type 5 zinc finger occupies 533–570; that stretch reads LTTCTGCRTQCRFFDMTQCIGPNGYMEPYCSTACMNSH. Residues Lys-576, Lys-603, Lys-649, Lys-658, Lys-688, Lys-700, and Lys-709 each participate in a glycyl lysine isopeptide (Lys-Gly) (interchain with G-Cter in SUMO2) cross-link. An MYM-type 6 zinc finger spans residues 636-671; it reads QLKCNYCKNSFCSKPEILEWENKVHQFCSKTCSDDY. 2 MYM-type zinc fingers span residues 723–758 and 764–799; these read RCVT…CKKF and KAAR…LLRF. Glycyl lysine isopeptide (Lys-Gly) (interchain with G-Cter in SUMO2) cross-links involve residues Lys-764, Lys-788, Lys-812, and Lys-829. 2 positions are modified to phosphoserine: Ser-838 and Ser-958. Disordered stretches follow at residues 983–1002 and 1028–1064; these read LLKN…PYEP and VFGE…SDNS. A compositionally biased stretch (basic residues) spans 1039-1050; the sequence is PRSKKKGAKRKA. A Phosphoserine modification is found at Ser-1064. Phosphothreonine is present on Thr-1376.

As to quaternary structure, may be a component of a BHC histone deacetylase complex that contains HDAC1, HDAC2, HMG20B/BRAF35, KDM1A, RCOR1/CoREST, PHF21A/BHC80, ZNF198, ZNF217, ZMYM3, GSE1 and GTF2I.

It localises to the nucleus. Its function is as follows. May function as a transcription factor. This Pongo abelii (Sumatran orangutan) protein is Zinc finger MYM-type protein 2 (ZMYM2).